Here is a 333-residue protein sequence, read N- to C-terminus: tRNA pseudouridine synthase B (333 aa).

Catalysis depends on Asp-46, which acts as the Nucleophile.

Belongs to the pseudouridine synthase TruB family. Type 1 subfamily.

The enzyme catalyses uridine(55) in tRNA = pseudouridine(55) in tRNA. In terms of biological role, responsible for synthesis of pseudouridine from uracil-55 in the psi GC loop of transfer RNAs. This Gluconobacter oxydans (strain 621H) (Gluconobacter suboxydans) protein is tRNA pseudouridine synthase B.